The chain runs to 230 residues: Small ribosomal subunit protein uS3 (230 aa).

Positions 39-107 constitute a KH type-2 domain; the sequence is VRKYLADKLQ…PAQINIAEIR (69 aa).

Belongs to the universal ribosomal protein uS3 family. In terms of assembly, part of the 30S ribosomal subunit. Forms a tight complex with proteins S10 and S14.

Binds the lower part of the 30S subunit head. Binds mRNA in the 70S ribosome, positioning it for translation. This is Small ribosomal subunit protein uS3 from Shewanella oneidensis (strain ATCC 700550 / JCM 31522 / CIP 106686 / LMG 19005 / NCIMB 14063 / MR-1).